Reading from the N-terminus, the 287-residue chain is ATP synthase gamma chain (287 aa).

The protein belongs to the ATPase gamma chain family. F-type ATPases have 2 components, CF(1) - the catalytic core - and CF(0) - the membrane proton channel. CF(1) has five subunits: alpha(3), beta(3), gamma(1), delta(1), epsilon(1). CF(0) has three main subunits: a, b and c.

The protein localises to the cell membrane. In terms of biological role, produces ATP from ADP in the presence of a proton gradient across the membrane. The gamma chain is believed to be important in regulating ATPase activity and the flow of protons through the CF(0) complex. This chain is ATP synthase gamma chain, found in Wolbachia sp. subsp. Drosophila simulans (strain wRi).